Reading from the N-terminus, the 190-residue chain is TATA box-binding protein-like 1 (190 aa).

The protein belongs to the TBP family. Binds TFIIA and TFIIB.

Its subcellular location is the cytoplasm. It is found in the nucleus. Functionally, part of a specialized transcription system that mediates the transcription of most ribosomal proteins through the 5'-TCT-3' motif which is a core promoter element at these genes. Seems to also mediate the transcription of NF1. Does not bind the TATA box. This Pongo abelii (Sumatran orangutan) protein is TATA box-binding protein-like 1 (TBPL1).